Here is a 299-residue protein sequence, read N- to C-terminus: Oxygen-dependent coproporphyrinogen-III oxidase (299 aa).

Ser-92 contributes to the substrate binding site. Positions 96 and 106 each coordinate Mn(2+). His-106 acts as the Proton donor in catalysis. 108–110 (NVR) is a binding site for substrate. The Mn(2+) site is built by His-145 and His-175. The interval 240–275 (YVEFNLVWDRGTLFGLQTGGRTESILMSMPPLVRWE) is important for dimerization. 258–260 (GGR) provides a ligand contact to substrate.

It belongs to the aerobic coproporphyrinogen-III oxidase family. As to quaternary structure, homodimer. Mn(2+) serves as cofactor.

The protein resides in the cytoplasm. The catalysed reaction is coproporphyrinogen III + O2 + 2 H(+) = protoporphyrinogen IX + 2 CO2 + 2 H2O. It functions in the pathway porphyrin-containing compound metabolism; protoporphyrin-IX biosynthesis; protoporphyrinogen-IX from coproporphyrinogen-III (O2 route): step 1/1. Involved in the heme biosynthesis. Catalyzes the aerobic oxidative decarboxylation of propionate groups of rings A and B of coproporphyrinogen-III to yield the vinyl groups in protoporphyrinogen-IX. In Escherichia coli (strain SMS-3-5 / SECEC), this protein is Oxygen-dependent coproporphyrinogen-III oxidase.